A 197-amino-acid polypeptide reads, in one-letter code: Probable chorismate pyruvate-lyase 2 (197 aa).

Over residues 1 to 14 (MRFDAADAHWRETP) the composition is skewed to basic and acidic residues. A disordered region spans residues 1–23 (MRFDAADAHWRETPRPGASSAQK). Substrate-binding residues include R73, L111, and E173.

The protein belongs to the UbiC family.

The protein resides in the cytoplasm. The enzyme catalyses chorismate = 4-hydroxybenzoate + pyruvate. It participates in cofactor biosynthesis; ubiquinone biosynthesis. Functionally, removes the pyruvyl group from chorismate, with concomitant aromatization of the ring, to provide 4-hydroxybenzoate (4HB) for the ubiquinone pathway. This Burkholderia pseudomallei (strain 1710b) protein is Probable chorismate pyruvate-lyase 2.